The following is a 141-amino-acid chain: Hemoglobin subunit alpha (141 aa).

Residues 1 to 22 (VLSEDDKNRVRTSVGKNPELPG) form a disordered region. The 141-residue stretch at 1–141 (VLSEDDKNRV…VSEVLESKYR (141 aa)) folds into the Globin domain. H58 serves as a coordination point for O2. H87 contacts heme b.

Belongs to the globin family. Heterotetramer of two alpha chains and two beta chains. As to expression, red blood cells.

Functionally, involved in oxygen transport from the lung to the various peripheral tissues. This is Hemoglobin subunit alpha (HBA) from Vipera aspis (Aspic viper).